Here is a 502-residue protein sequence, read N- to C-terminus: Probable cytochrome P450 28d1 (502 aa).

Heme is bound at residue cysteine 446.

The protein belongs to the cytochrome P450 family. The cofactor is heme.

Its subcellular location is the endoplasmic reticulum membrane. It is found in the microsome membrane. Functionally, may be involved in the metabolism of insect hormones and in the breakdown of synthetic insecticides. In Drosophila melanogaster (Fruit fly), this protein is Probable cytochrome P450 28d1 (Cyp28d1).